The following is a 363-amino-acid chain: Chorismate synthase (363 aa).

NADP(+)-binding residues include Arg-48 and Arg-54. Residues 125 to 127, 238 to 239, Gly-278, 293 to 297, and Arg-319 contribute to the FMN site; these read RSS, NA, and KPTSS.

It belongs to the chorismate synthase family. In terms of assembly, homotetramer. It depends on FMNH2 as a cofactor.

It carries out the reaction 5-O-(1-carboxyvinyl)-3-phosphoshikimate = chorismate + phosphate. Its pathway is metabolic intermediate biosynthesis; chorismate biosynthesis; chorismate from D-erythrose 4-phosphate and phosphoenolpyruvate: step 7/7. In terms of biological role, catalyzes the anti-1,4-elimination of the C-3 phosphate and the C-6 proR hydrogen from 5-enolpyruvylshikimate-3-phosphate (EPSP) to yield chorismate, which is the branch point compound that serves as the starting substrate for the three terminal pathways of aromatic amino acid biosynthesis. This reaction introduces a second double bond into the aromatic ring system. The sequence is that of Chorismate synthase from Alcanivorax borkumensis (strain ATCC 700651 / DSM 11573 / NCIMB 13689 / SK2).